The chain runs to 220 residues: Deoxyribose-phosphate aldolase 1 (220 aa).

D89 functions as the Proton donor/acceptor in the catalytic mechanism. The active-site Schiff-base intermediate with acetaldehyde is K151. Catalysis depends on K180, which acts as the Proton donor/acceptor.

It belongs to the DeoC/FbaB aldolase family. DeoC type 1 subfamily.

Its subcellular location is the cytoplasm. The catalysed reaction is 2-deoxy-D-ribose 5-phosphate = D-glyceraldehyde 3-phosphate + acetaldehyde. Its pathway is carbohydrate degradation; 2-deoxy-D-ribose 1-phosphate degradation; D-glyceraldehyde 3-phosphate and acetaldehyde from 2-deoxy-alpha-D-ribose 1-phosphate: step 2/2. Catalyzes a reversible aldol reaction between acetaldehyde and D-glyceraldehyde 3-phosphate to generate 2-deoxy-D-ribose 5-phosphate. In Staphylococcus aureus (strain bovine RF122 / ET3-1), this protein is Deoxyribose-phosphate aldolase 1.